Reading from the N-terminus, the 205-residue chain is High frequency lysogenization protein HflD homolog (205 aa).

Belongs to the HflD family.

The protein localises to the cytoplasm. The protein resides in the cell inner membrane. This chain is High frequency lysogenization protein HflD homolog, found in Aliivibrio fischeri (strain ATCC 700601 / ES114) (Vibrio fischeri).